A 272-amino-acid chain; its full sequence is Putative pyruvate, phosphate dikinase regulatory protein (272 aa).

An ADP-binding site is contributed by 153-160; the sequence is GVSRTSKT.

It belongs to the pyruvate, phosphate/water dikinase regulatory protein family. PDRP subfamily.

It catalyses the reaction N(tele)-phospho-L-histidyl/L-threonyl-[pyruvate, phosphate dikinase] + ADP = N(tele)-phospho-L-histidyl/O-phospho-L-threonyl-[pyruvate, phosphate dikinase] + AMP + H(+). The catalysed reaction is N(tele)-phospho-L-histidyl/O-phospho-L-threonyl-[pyruvate, phosphate dikinase] + phosphate + H(+) = N(tele)-phospho-L-histidyl/L-threonyl-[pyruvate, phosphate dikinase] + diphosphate. Functionally, bifunctional serine/threonine kinase and phosphorylase involved in the regulation of the pyruvate, phosphate dikinase (PPDK) by catalyzing its phosphorylation/dephosphorylation. This Streptococcus sanguinis (strain SK36) protein is Putative pyruvate, phosphate dikinase regulatory protein.